Consider the following 331-residue polypeptide: Probable mannose-1-phosphate guanylyltransferase 3 (331 aa).

Diphosphate is bound at residue lysine 3. GDP-alpha-D-mannose-binding residues include glycine 66, asparagine 90, aspartate 92, glycine 127, and asparagine 154.

Belongs to the transferase hexapeptide repeat family.

The catalysed reaction is alpha-D-mannose 1-phosphate + GTP + H(+) = GDP-alpha-D-mannose + diphosphate. Its pathway is nucleotide-sugar biosynthesis; GDP-alpha-D-mannose biosynthesis; GDP-alpha-D-mannose from alpha-D-mannose 1-phosphate (GTP route): step 1/1. In terms of biological role, catalyzes a reaction of the Smirnoff-Wheeler pathway, the major route to ascorbate biosynthesis in plants. This chain is Probable mannose-1-phosphate guanylyltransferase 3, found in Arabidopsis thaliana (Mouse-ear cress).